The chain runs to 282 residues: Biotin synthase (282 aa).

The Radical SAM core domain occupies 1–228; the sequence is MQEIFLCSIS…NARLMVAGGR (228 aa). 3 residues coordinate [4Fe-4S] cluster: C17, C21, and C24. [2Fe-2S] cluster-binding residues include C61, C96, C154, and R221.

The protein belongs to the radical SAM superfamily. Biotin synthase family. Homodimer. It depends on [4Fe-4S] cluster as a cofactor. [2Fe-2S] cluster is required as a cofactor.

The enzyme catalyses (4R,5S)-dethiobiotin + (sulfur carrier)-SH + 2 reduced [2Fe-2S]-[ferredoxin] + 2 S-adenosyl-L-methionine = (sulfur carrier)-H + biotin + 2 5'-deoxyadenosine + 2 L-methionine + 2 oxidized [2Fe-2S]-[ferredoxin]. It functions in the pathway cofactor biosynthesis; biotin biosynthesis; biotin from 7,8-diaminononanoate: step 2/2. Catalyzes the conversion of dethiobiotin (DTB) to biotin by the insertion of a sulfur atom into dethiobiotin via a radical-based mechanism. This is Biotin synthase from Helicobacter pylori (strain G27).